We begin with the raw amino-acid sequence, 235 residues long: Adenosine 5'-phosphosulfate reductase (235 aa).

[4Fe-4S] cluster-binding residues include Cys-121, Cys-122, Cys-204, and Cys-207. Residue Cys-230 is the Nucleophile; cysteine thiosulfonate intermediate of the active site.

This sequence belongs to the PAPS reductase family. CysH subfamily. Requires [4Fe-4S] cluster as cofactor.

The protein resides in the cytoplasm. It carries out the reaction [thioredoxin]-disulfide + sulfite + AMP + 2 H(+) = adenosine 5'-phosphosulfate + [thioredoxin]-dithiol. The protein operates within sulfur metabolism; hydrogen sulfide biosynthesis; sulfite from sulfate. Its function is as follows. Catalyzes the formation of sulfite from adenosine 5'-phosphosulfate (APS) using thioredoxin as an electron donor. The chain is Adenosine 5'-phosphosulfate reductase from Geobacillus sp. (strain WCH70).